A 65-amino-acid chain; its full sequence is Ferredoxin-1 (65 aa).

Positions 3–31 (RKFYVDQDECIACESCVEIAPGAFAMDPE) constitute a 4Fe-4S ferredoxin-type domain. [4Fe-4S] cluster-binding residues include C12, C15, C18, and C55.

In terms of assembly, homodimer. It depends on [4Fe-4S] cluster as a cofactor.

In terms of biological role, ferredoxins are iron-sulfur proteins that transfer electrons in a wide variety of metabolic reactions. In Desulfocurvibacter africanus (Desulfovibrio africanus), this protein is Ferredoxin-1 (fd1).